The chain runs to 72 residues: SPbeta prophage-derived uncharacterized protein YorV (72 aa).

The chain is SPbeta prophage-derived uncharacterized protein YorV (yorV) from Bacillus subtilis (strain 168).